The sequence spans 419 residues: S-adenosylmethionine synthase (419 aa).

H15 provides a ligand contact to ATP. Mg(2+) is bound at residue D17. E43 is a binding site for K(+). The L-methionine site is built by E56 and Q100. The interval 100–110 is flexible loop; that stretch reads QSPDIAQGVDE. Residues 171-173, 248-249, D257, 263-264, A280, and K284 each bind ATP; these read DGK, KF, and RK. D257 contacts L-methionine. Residue K288 coordinates L-methionine.

The protein belongs to the AdoMet synthase family. As to quaternary structure, homotetramer; dimer of dimers. Mg(2+) is required as a cofactor. The cofactor is K(+).

The protein resides in the cytoplasm. The catalysed reaction is L-methionine + ATP + H2O = S-adenosyl-L-methionine + phosphate + diphosphate. Its pathway is amino-acid biosynthesis; S-adenosyl-L-methionine biosynthesis; S-adenosyl-L-methionine from L-methionine: step 1/1. Its function is as follows. Catalyzes the formation of S-adenosylmethionine (AdoMet) from methionine and ATP. The overall synthetic reaction is composed of two sequential steps, AdoMet formation and the subsequent tripolyphosphate hydrolysis which occurs prior to release of AdoMet from the enzyme. The protein is S-adenosylmethionine synthase of Parasynechococcus marenigrum (strain WH8102).